The chain runs to 741 residues: Transketolase, chloroplastic (741 aa).

Residues Met1–His19 are compositionally biased toward low complexity. Residues Met1–Leu33 are disordered. A chloroplast-targeting transit peptide spans Met1–Ala66. Residues Leu24 to Leu33 are compositionally biased toward polar residues. A substrate-binding site is contributed by His103. Residues His143 and Gly192 to Leu194 contribute to the thiamine diphosphate site. Asp233 is a Mg(2+) binding site. Residues Gly234 and Asn263 each contribute to the thiamine diphosphate site. Residues Asn263 and Ile265 each contribute to the Mg(2+) site. Substrate is bound by residues His340, Arg434, and Ser461. Position 340 (His340) interacts with thiamine diphosphate. Thiamine diphosphate-binding residues include Glu488 and Phe515. Residue Glu488 is the Proton donor of the active site. The substrate site is built by His539, Asp547, and Arg598.

It belongs to the transketolase family. In terms of assembly, homodimer. Requires Mg(2+) as cofactor. Ca(2+) serves as cofactor. Mn(2+) is required as a cofactor. The cofactor is Co(2+). It depends on thiamine diphosphate as a cofactor.

The protein resides in the plastid. The protein localises to the chloroplast thylakoid membrane. The catalysed reaction is D-sedoheptulose 7-phosphate + D-glyceraldehyde 3-phosphate = aldehydo-D-ribose 5-phosphate + D-xylulose 5-phosphate. It participates in carbohydrate biosynthesis; Calvin cycle. Functionally, catalyzes the reversible transfer of a two-carbon ketol group from fructose-6-phosphate or sedoheptulose-7-phosphate to glyceraldehyde-3-phosphate to yield xylulose-5-phosphate and erythrose-4-phosphate or ribose-5-phosphate, respectively. The sequence is that of Transketolase, chloroplastic from Spinacia oleracea (Spinach).